A 175-amino-acid chain; its full sequence is Urease accessory protein UreE (175 aa).

A disordered region spans residues G151–P175. The segment covering H160–S169 has biased composition (basic residues).

Belongs to the UreE family.

The protein resides in the cytoplasm. In terms of biological role, involved in urease metallocenter assembly. Binds nickel. Probably functions as a nickel donor during metallocenter assembly. The polypeptide is Urease accessory protein UreE (Synechococcus sp. (strain WH7805)).